Here is a 236-residue protein sequence, read N- to C-terminus: 2,3,4,5-tetrahydropyridine-2,6-dicarboxylate N-acetyltransferase (236 aa).

It belongs to the transferase hexapeptide repeat family. DapH subfamily.

The catalysed reaction is (S)-2,3,4,5-tetrahydrodipicolinate + acetyl-CoA + H2O = L-2-acetamido-6-oxoheptanedioate + CoA. It functions in the pathway amino-acid biosynthesis; L-lysine biosynthesis via DAP pathway; LL-2,6-diaminopimelate from (S)-tetrahydrodipicolinate (acetylase route): step 1/3. Catalyzes the transfer of an acetyl group from acetyl-CoA to tetrahydrodipicolinate. The chain is 2,3,4,5-tetrahydropyridine-2,6-dicarboxylate N-acetyltransferase from Oceanobacillus iheyensis (strain DSM 14371 / CIP 107618 / JCM 11309 / KCTC 3954 / HTE831).